Reading from the N-terminus, the 325-residue chain is Protein ORANGE-GREEN, chloroplastic (325 aa).

A chloroplast-targeting transit peptide spans 1-54 (MDRVLVASYPINHLIRPHSFRIDYCWSTCFTSRLNSGKERQKLSSRWRWRSMAS). A compositionally biased stretch (low complexity) spans 53 to 71 (ASDSTDSSSSSSFAPSVES). The interval 53 to 77 (ASDSTDSSSSSSFAPSVESDPSDKT) is disordered. 2 helical membrane passes run 164-184 (LYYVTCYSLIAGIILFGGLLA) and 217-237 (IVASFSGGAVGVISALMVVEV). Positions 226–317 (VGVISALMVV…CTGMAMASEH (92 aa)) are CR-type-like. Residues 248-255 (CKYCLGTG) form a CXXCXGXG motif repeat. The CXXCXXXG motif repeat unit spans residues 259-266 (CARCSNTG). The CXXCXGXG motif repeat unit spans residues 292 to 299 (CQNCSGSG). The stretch at 303 to 310 (CPTCLCTG) is one CXXCXXXG motif repeat.

The protein belongs to the orange-like family.

The protein resides in the plastid. Its subcellular location is the chloroplast membrane. Its function is as follows. Involved in chloroplast differentiation in fruit flesh. The protein is Protein ORANGE-GREEN, chloroplastic of Cucumis melo (Muskmelon).